We begin with the raw amino-acid sequence, 131 residues long: Calvin cycle protein CP12-2, chloroplastic (131 aa).

The N-terminal 53 residues, 1–53 (MATIATGLNIATQRVFVTSENRPVCLAGPVHLNNSWNLGSRTTNRMMKLQPIK), are a transit peptide targeting the chloroplast. 2 disulfides stabilise this stretch: C75/C84 and C117/C126. The segment at 97–131 (AASHARDKKKADGSDPLEEYCKDNPETNECRTYDN) is disordered. The span at 105 to 131 (KKADGSDPLEEYCKDNPETNECRTYDN) shows a compositional bias: basic and acidic residues.

Belongs to the CP12 family. Monomer. Component of a complex that contains two dimers of PRK, two tetramers of GAPDH and CP12. CP12 associates with GAPDH, causing its conformation to change. This GAPDH/CP12 complex binds PRK to form a half-complex (one unit). This unit probably dimerizes due partially to interactions between the enzymes of each unit. Post-translationally, contains two disulfide bonds; only the oxidized protein, with two disulfide bonds, is active in complex formation. The C-terminal disulfide is involved in the interaction with GAPDH and the N-terminal disulfide mediates the binding of PRK with this binary complex. Mostly expressed in cotyledons, leaves and flower stalks, and, to a lower extent, in flowers and stems. Barely detectable in roots and siliques.

The protein resides in the plastid. Its subcellular location is the chloroplast. Its function is as follows. Acts as a linker essential in the assembly of a core complex of PRK/GAPDH. Coordinates the reversible inactivation of chloroplast enzymes GAPDH and PRK during darkness in photosynthetic tissues. This chain is Calvin cycle protein CP12-2, chloroplastic (CP12-2), found in Arabidopsis thaliana (Mouse-ear cress).